A 186-amino-acid polypeptide reads, in one-letter code: Thioredoxin M2, chloroplastic (186 aa).

Residues M1–V72 constitute a chloroplast transit peptide. The Thioredoxin domain occupies C73–P186. Catalysis depends on nucleophile residues C110 and C113. A disulfide bond links C110 and C113.

This sequence belongs to the thioredoxin family. Plant M-type subfamily. In terms of assembly, interacts with G6PD1 and G6PD4. Interacts with PGL3.

The protein localises to the plastid. The protein resides in the chloroplast stroma. Functionally, thiol-disulfide oxidoreductase that may participate in various redox reactions. May activate NADP-malate dehydrogenase. The protein is Thioredoxin M2, chloroplastic of Arabidopsis thaliana (Mouse-ear cress).